A 901-amino-acid polypeptide reads, in one-letter code: HTH-type transcriptional regulator MalT (901 aa).

Residue 39–46 (SPAGYGKT) participates in ATP binding. One can recognise an HTH luxR-type domain in the interval 829-894 (ELIRTSPLTQ…DAVQHAQQLL (66 aa)). A DNA-binding region (H-T-H motif) is located at residues 853–872 (NEQIAGELEVAATTIKTHIR).

This sequence belongs to the MalT family. In terms of assembly, monomer in solution. Oligomerizes to an active state in the presence of the positive effectors ATP and maltotriose.

Its activity is regulated as follows. Activated by ATP and maltotriose, which are both required for DNA binding. Functionally, positively regulates the transcription of the maltose regulon whose gene products are responsible for uptake and catabolism of malto-oligosaccharides. Specifically binds to the promoter region of its target genes, recognizing a short DNA motif called the MalT box. This chain is HTH-type transcriptional regulator MalT, found in Escherichia fergusonii (strain ATCC 35469 / DSM 13698 / CCUG 18766 / IAM 14443 / JCM 21226 / LMG 7866 / NBRC 102419 / NCTC 12128 / CDC 0568-73).